The sequence spans 832 residues: Protein wech (832 aa).

Residues 1–14 (MMELLSNNSVPQQM) show a composition bias toward polar residues. A disordered region spans residues 1–42 (MMELLSNNSVPQQMASSNAPSANNVAHSSTANGSGGGSVSSN). Residues 15 to 32 (ASSNAPSANNVAHSSTAN) are compositionally biased toward low complexity. Residue serine 107 is modified to Phosphoserine. 2 B box-type zinc fingers span residues 118 to 163 (NSSI…IVSL) and 184 to 224 (SGNF…YASI). Zn(2+)-binding residues include cysteine 123, cysteine 126, cysteine 145, histidine 149, cysteine 189, histidine 192, cysteine 211, and histidine 216. Serine 470, serine 475, and serine 506 each carry phosphoserine. 5 NHL repeats span residues 537 to 580 (SLSF…FNPD), 584 to 627 (KFKF…FTAS), 631 to 674 (LLKF…FDSE), 680 to 722 (QIVF…IDPD), and 727 to 770 (LSVK…FNQN).

In terms of assembly, interacts with the head domain of rhea and the kinase domain of Ilk. Interacts with AGO1. Interacts with mei-P26. Expressed in ovarian germline stem cells (at protein level). Expressed ubiquitously in all epithelial cells during early stages of embryogenesis. Specifically expressed at epidermal muscle attachment site.

Its function is as follows. Vital for larval development. Plays a role in tumor formation. A crucial component for the physical link between integrins and the cytoskeleton in the epidermal muscle attachment sites. The chain is Protein wech (wech) from Drosophila melanogaster (Fruit fly).